The chain runs to 1856 residues: DNA-directed RNA polymerase II subunit RPB1 (1856 aa).

Zn(2+)-binding residues include cysteine 66, cysteine 69, cysteine 76, histidine 79, cysteine 106, cysteine 109, cysteine 149, and cysteine 177. The segment at 256 to 268 (PAVVTFGSAKNQD) is lid loop. Residues 314–331 (NCIPGLPTATQKGGRPLK) form a rudder loop region. The Mg(2+) site is built by aspartate 489, aspartate 491, and aspartate 493. Residues 827 to 839 (PSEFFFHAMGGRE) form a bridging helix region. A Glycyl lysine isopeptide (Lys-Gly) (interchain with G-Cter in ubiquitin) cross-link involves residue lysine 1260. Positions 1523-1856 (PTTGGMSPGA…PSSPTYDPNS (334 aa)) are disordered. Residues 1587–1856 (SMTSPHYSPT…PSSPTYDPNS (270 aa)) show a composition bias toward low complexity. Tandem repeats lie at residues 1593-1599 (YSPTSPS), 1600-1606 (YSPTSPA), 1616-1622 (YSPTSPS), 1623-1629 (YSPTSPS), 1630-1636 (YSPTSPS), 1637-1643 (YSPTSPS), 1644-1650 (YSPTSPS), 1651-1657 (YSPTSPS), 1658-1664 (YSPSSPS), 1665-1671 (YSPSSPS), 1672-1678 (YSPSSPR), 1679-1685 (YSPTSPT), 1686-1692 (YSPTSPT), 1693-1699 (YSPTSPT), 1700-1706 (YSPTSPT), 1707-1713 (YSPTSPS), 1720-1726 (YSPSSPK), 1727-1733 (YSPSSPT), 1734-1740 (YSPTSPS), 1741-1747 (YSPTSPQ), 1748-1754 (YSPTSPQ), 1755-1761 (YSPSSPT), 1769-1775 (YNPTSPR), 1782-1788 (YSPTSPT), 1789-1795 (YSPTSPS), 1796-1802 (YTPSSPQ), and 1803-1809 (YSPTSPT). The segment at 1593 to 1816 (YSPTSPSYSP…SPTYTPSPSE (224 aa)) is C-terminal domain (CTD); 28 X 7 AA approximate tandem repeats of Y-[ST]-P-[ST]-S-P-[AGKNQRST]. The stretch at 1810–1816 (YTPSPSE) is one 28; approximate repeat.

The protein belongs to the RNA polymerase beta' chain family. Component of the RNA polymerase II (Pol II) complex consisting of 12 subunits. Interacts with sig-7. Post-translationally, the tandem 7 residues repeats in the C-terminal domain (CTD) can be highly phosphorylated. The phosphorylation activates Pol II. Phosphorylation occurs mainly at residues 'Ser-2' and 'Ser-5' of the heptapeptide repeat and starts at the 3- to 4-cell embryonic stage. This phosphorylation also occurs in the early stages of oocyte development and is not detected in oocytes arrested at the meiotic diakinesis stage. In the somatic lineage, phosphorylation at 'Ser-2' is mediated by cdk-12 downstream of cdk-9 whereas in the germline lineage cdk-12 phosphorylates 'Ser-2' independently of cdk-9. Phosphorylation is likely mediated by cdk-7. May be dephosphorylated by fcp-1 in diakinetic oocytes and in 1-cell and 2-cell embryos. Dephosphorylated at 'Ser-5' of the heptapeptide repeats by ssup-72. The phosphorylation state is believed to result from the balanced action of site-specific CTD kinases and phosphatase, and a 'CTD code' that specifies the position of Pol II within the transcription cycle has been proposed. In terms of processing, following transcription stress, the elongating form of RNA polymerase II (RNA pol IIo) is polyubiquitinated via 'Lys-63'-linkages on Lys-1260 at DNA damage sites without leading to degradation: ubiquitination promotes RNA pol IIo backtracking to allow access by the transcription-coupled nucleotide excision repair (TC-NER) machinery. Subsequent DEF1-dependent polyubiquitination by the elongin complex via 'Lys-48'-linkages may lead to proteasome-mediated degradation; presumably at stalled RNA pol II where TC-NER has failed, to halt global transcription and enable 'last resort' DNA repair pathways.

The protein resides in the nucleus. Its subcellular location is the chromosome. The enzyme catalyses RNA(n) + a ribonucleoside 5'-triphosphate = RNA(n+1) + diphosphate. Its function is as follows. DNA-dependent RNA polymerase catalyzes the transcription of DNA into RNA using the four ribonucleoside triphosphates as substrates. Largest and catalytic component of RNA polymerase II which synthesizes mRNA precursors and many functional non-coding RNAs. Forms the polymerase active center together with the second largest subunit. Pol II is the central component of the basal RNA polymerase II transcription machinery. It is composed of mobile elements that move relative to each other. RPB1 is part of the core element with the central large cleft, the clamp element that moves to open and close the cleft and the jaws that are thought to grab the incoming DNA template. At the start of transcription, a single-stranded DNA template strand of the promoter is positioned within the central active site cleft of Pol II. A bridging helix emanates from RPB1 and crosses the cleft near the catalytic site and is thought to promote translocation of Pol II by acting as a ratchet that moves the RNA-DNA hybrid through the active site by switching from straight to bent conformations at each step of nucleotide addition. During transcription elongation, Pol II moves on the template as the transcript elongates. Elongation is influenced by the phosphorylation status of the C-terminal domain (CTD) of Pol II largest subunit (RPB1), which serves as a platform for assembly of factors that regulate transcription initiation, elongation, termination and mRNA processing. Involved in the transcription of several genes including those involved in embryogenesis. This chain is DNA-directed RNA polymerase II subunit RPB1, found in Caenorhabditis elegans.